We begin with the raw amino-acid sequence, 963 residues long: Glycine dehydrogenase (decarboxylating) (963 aa).

N6-(pyridoxal phosphate)lysine is present on K707.

The protein belongs to the GcvP family. The glycine cleavage system is composed of four proteins: P, T, L and H. Requires pyridoxal 5'-phosphate as cofactor.

It carries out the reaction N(6)-[(R)-lipoyl]-L-lysyl-[glycine-cleavage complex H protein] + glycine + H(+) = N(6)-[(R)-S(8)-aminomethyldihydrolipoyl]-L-lysyl-[glycine-cleavage complex H protein] + CO2. Functionally, the glycine cleavage system catalyzes the degradation of glycine. The P protein binds the alpha-amino group of glycine through its pyridoxal phosphate cofactor; CO(2) is released and the remaining methylamine moiety is then transferred to the lipoamide cofactor of the H protein. The chain is Glycine dehydrogenase (decarboxylating) from Dechloromonas aromatica (strain RCB).